The primary structure comprises 227 residues: Cell wall mannoprotein CIS3 (227 aa).

Residues 1-21 form the signal peptide; it reads MQFKNVALAASVAALSATASA. Positions 22–64 are excised as a propeptide; sequence EGYTPGEPWSTLTPTGSISCGAAEYTTTFGIAVQAITSSKAKR. One copy of the PIR1/2/3 repeat lies at 65 to 78; the sequence is DVISQIGDGQVQAT. An O-linked (Man) serine glycan is attached at serine 68. Residue threonine 78 is glycosylated (O-linked (Man) threonine). The segment covering 83-124 has biased composition (low complexity); it reads AQATDSQAQATTTATPTSSEKISSSASKTSTNATSSSCATPS. Positions 83-127 are disordered; the sequence is AQATDSQAQATTTATPTSSEKISSSASKTSTNATSSSCATPSLKD. 4 O-linked (Man) serine glycosylation sites follow: serine 105, serine 106, serine 107, and serine 109. Residue threonine 111 is glycosylated (O-linked (Man) threonine). The O-linked (Man) serine glycan is linked to serine 112. A glycan (O-linked (Man) threonine) is linked at threonine 113. N-linked (GlcNAc...) asparagine glycosylation is present at asparagine 114. Residue threonine 116 is glycosylated (O-linked (Man) threonine). O-linked (Man) serine glycosylation is found at serine 117 and serine 118.

The protein belongs to the PIR protein family. Post-translationally, covalently linked to beta-1,3-glucan of the inner cell wall layer via an alkali-sensitive ester linkage between the gamma-carboxyl group of glutamic acid, arising from Gln-74 within the PIR1/2/3 repeat, and hydroxyl groups of glucoses of beta-1,3-glucan chains. Extensively O-mannosylated. Also N-glycosylated.

The protein resides in the secreted. The protein localises to the cell wall. Component of the outer cell wall layer. Required for stability of the cell wall and for optimal growth. Required for resistance against several antifungal and cell wall-perturbing agents. In Saccharomyces cerevisiae (strain ATCC 204508 / S288c) (Baker's yeast), this protein is Cell wall mannoprotein CIS3 (CIS3).